The following is a 164-amino-acid chain: Phosphopantetheine adenylyltransferase (164 aa).

Ser-9 is a substrate binding site. ATP contacts are provided by residues 9–10 (SF) and His-17. Substrate contacts are provided by Lys-41, Leu-73, and Arg-87. ATP-binding positions include 88–90 (GLR), Glu-98, and 123–129 (YTFLSSS).

The protein belongs to the bacterial CoaD family. As to quaternary structure, homohexamer. Mg(2+) is required as a cofactor.

The protein resides in the cytoplasm. The enzyme catalyses (R)-4'-phosphopantetheine + ATP + H(+) = 3'-dephospho-CoA + diphosphate. Its pathway is cofactor biosynthesis; coenzyme A biosynthesis; CoA from (R)-pantothenate: step 4/5. Reversibly transfers an adenylyl group from ATP to 4'-phosphopantetheine, yielding dephospho-CoA (dPCoA) and pyrophosphate. The protein is Phosphopantetheine adenylyltransferase of Dictyoglomus thermophilum (strain ATCC 35947 / DSM 3960 / H-6-12).